The chain runs to 256 residues: Calsenilin (256 aa).

The segment at 1–22 is disordered; it reads MQRTKEAMKASDGSLLGDPGRI. Phosphoserine is present on serine 14. Lysine 26 is covalently cross-linked (Glycyl lysine isopeptide (Lys-Gly) (interchain with G-Cter in SUMO1)). S-palmitoyl cysteine attachment occurs at residues cysteine 45 and cysteine 46. Phosphoserine occurs at positions 60 and 63. The EF-hand 1; degenerate domain maps to 67–123; sequence LELSTVRHQPEGLDQLQAQTKFTKKELQSLYRGFKNECPTGLVDEDTFKLIYSQFFP. Residue lysine 90 forms a Glycyl lysine isopeptide (Lys-Gly) (interchain with G-Cter in SUMO1) linkage. EF-hand domains follow at residues 126–161, 162–197, and 210–245; these read DATT…LLRG, TVHE…IYDM, and APLE…DENI. Positions 175, 177, 179, 181, 186, 223, 225, 227, and 234 each coordinate Ca(2+). An interaction with KCND2 region spans residues 243–256; the sequence is ENIMSSMQLFENVI.

This sequence belongs to the recoverin family. Binds to DNA as a homomultimer. Dimerization is induced by binding to calcium. Interacts with the C-terminus of PSEN1 and PSEN2 and with PSEN2 CTF subunit. Associates with KCN1. Component of heteromultimeric potassium channels. Identified in potassium channel complexes containing KCND1, KCND2, KCND3, KCNIP1, KCNIP2, KCNIP3, KCNIP4, DPP6 and DPP10. Interacts with KCND2 and KCND3. In terms of processing, palmitoylated. Palmitoylation enhances association with the plasma membrane. Proteolytically cleaved by caspase-3. In terms of tissue distribution, detected in brain cortex, thalamus, dentate gyrus and cerebellum (at protein level). Expressed in brain. Colocalizes with KCND2 in excitatory neurons including cortical and hippocampal CA1 pyramidal cells.

Its subcellular location is the cytoplasm. The protein localises to the cell membrane. It is found in the endoplasmic reticulum. It localises to the golgi apparatus. The protein resides in the nucleus. In terms of biological role, calcium-dependent transcriptional repressor that binds to the DRE element of genes including PDYN and FOS. Affinity for DNA is reduced upon binding to calcium and enhanced by binding to magnesium. Seems to be involved in nociception. Its function is as follows. Regulatory subunit of Kv4/D (Shal)-type voltage-gated rapidly inactivating A-type potassium channels, such as KCND2/Kv4.2 and KCND3/Kv4.3. Modulates channel expression at the cell membrane, gating characteristics, inactivation kinetics and rate of recovery from inactivation in a calcium-dependent and isoform-specific manner. May play a role in the regulation of PSEN2 proteolytic processing and apoptosis. Together with PSEN2 involved in modulation of amyloid-beta formation. This is Calsenilin (Kcnip3) from Rattus norvegicus (Rat).